We begin with the raw amino-acid sequence, 650 residues long: Probable E3 ubiquitin ligase complex SCF subunit scon-2 (650 aa).

The F-box domain maps to 124 to 170 (IDFISALPVELAQKVLCYLDTVSLTKAAQVSQRWRTLADSDAVWVRM). The interval 200-244 (QRQLAKGGPQGRVTELADSHDSQDRSVNQHGKRPAAEAEEEDPIK) is disordered. The span at 214 to 223 (ELADSHDSQD) shows a compositional bias: basic and acidic residues. WD repeat units lie at residues 292–320 (GHEN…KIWN), 332–360 (GHTA…KVWN), 372–400 (AHTD…KIFD), 411–441 (GHSD…KLWD), and 453–488 (GHVG…AMSV). Residues 482–525 (NQDAMSVSSGGSGSPSMSHAQIERAGSPGSHSSSHNLLPSSLPS) are disordered. Composition is skewed to low complexity over residues 487–499 (SVSS…PSMS) and 507–525 (GSPG…SLPS). 3 WD repeats span residues 528–564 (EDVR…RLWD), 576–604 (GHLE…KTWE), and 616–644 (GHCG…RLHS).

The protein belongs to the WD repeat MET30/SCONB/SCON-2 family. As to quaternary structure, component of the SCF(scon-2) E3 ubiquitin ligase complex.

It participates in protein modification; protein ubiquitination. Its function is as follows. Component of the SCF(scon-2) E3 ubiquitin ligase complex involved in the regulation of sulfur metabolite repression, probably by mediating the inactivation or degradation of the metR transcription factor. The protein is Probable E3 ubiquitin ligase complex SCF subunit scon-2 (scon-2) of Neurospora crassa (strain ATCC 24698 / 74-OR23-1A / CBS 708.71 / DSM 1257 / FGSC 987).